The primary structure comprises 343 residues: Ketol-acid reductoisomerase (NADP(+)) (343 aa).

The region spanning 7 to 186 (TTVYYDEDAD…GCTRAGVIET (180 aa)) is the KARI N-terminal Rossmann domain. NADP(+) contacts are provided by residues 30–33 (YGSQ), Arg53, Ser56, Ser58, and 88–91 (DTIQ). Residue His112 is part of the active site. Gly138 serves as a coordination point for NADP(+). Residues 187–329 (SFQEEVETDL…ENLRELFAWG (143 aa)) enclose the KARI C-terminal knotted domain. Mg(2+)-binding residues include Asp195, Glu199, Glu231, and Glu235. A substrate-binding site is contributed by Ser256.

Belongs to the ketol-acid reductoisomerase family. Mg(2+) serves as cofactor.

The enzyme catalyses (2R)-2,3-dihydroxy-3-methylbutanoate + NADP(+) = (2S)-2-acetolactate + NADPH + H(+). It catalyses the reaction (2R,3R)-2,3-dihydroxy-3-methylpentanoate + NADP(+) = (S)-2-ethyl-2-hydroxy-3-oxobutanoate + NADPH + H(+). The protein operates within amino-acid biosynthesis; L-isoleucine biosynthesis; L-isoleucine from 2-oxobutanoate: step 2/4. It participates in amino-acid biosynthesis; L-valine biosynthesis; L-valine from pyruvate: step 2/4. Functionally, involved in the biosynthesis of branched-chain amino acids (BCAA). Catalyzes an alkyl-migration followed by a ketol-acid reduction of (S)-2-acetolactate (S2AL) to yield (R)-2,3-dihydroxy-isovalerate. In the isomerase reaction, S2AL is rearranged via a Mg-dependent methyl migration to produce 3-hydroxy-3-methyl-2-ketobutyrate (HMKB). In the reductase reaction, this 2-ketoacid undergoes a metal-dependent reduction by NADPH to yield (R)-2,3-dihydroxy-isovalerate. In Haloarcula marismortui (strain ATCC 43049 / DSM 3752 / JCM 8966 / VKM B-1809) (Halobacterium marismortui), this protein is Ketol-acid reductoisomerase (NADP(+)).